The primary structure comprises 105 residues: Met repressor (105 aa).

This sequence belongs to the MetJ family. In terms of assembly, homodimer.

It localises to the cytoplasm. Functionally, this regulatory protein, when combined with SAM (S-adenosylmethionine) represses the expression of the methionine regulon and of enzymes involved in SAM synthesis. The polypeptide is Met repressor (Proteus mirabilis (strain HI4320)).